A 343-amino-acid chain; its full sequence is Fructose-bisphosphate aldolase (343 aa).

Serine 53 provides a ligand contact to D-glyceraldehyde 3-phosphate. The active-site Proton donor is aspartate 95. The Zn(2+) site is built by histidine 96, aspartate 131, glutamate 161, and histidine 212. Position 213 (glycine 213) interacts with dihydroxyacetone phosphate. Histidine 252 contributes to the Zn(2+) binding site. Residues 253–255 (GGS) and 274–277 (NIDT) each bind dihydroxyacetone phosphate.

Belongs to the class II fructose-bisphosphate aldolase family. Zn(2+) serves as cofactor.

The catalysed reaction is beta-D-fructose 1,6-bisphosphate = D-glyceraldehyde 3-phosphate + dihydroxyacetone phosphate. It functions in the pathway carbohydrate degradation; glycolysis; D-glyceraldehyde 3-phosphate and glycerone phosphate from D-glucose: step 4/4. Its function is as follows. Catalyzes the aldol condensation of dihydroxyacetone phosphate (DHAP or glycerone-phosphate) with glyceraldehyde 3-phosphate (G3P) to form fructose 1,6-bisphosphate (FBP) in gluconeogenesis and the reverse reaction in glycolysis. This chain is Fructose-bisphosphate aldolase (fba), found in Streptomyces coelicolor (strain ATCC BAA-471 / A3(2) / M145).